The sequence spans 194 residues: MSLVPVVVEQTNRGERSYDIYSRLLKDRIIMLSDQVNDVTASLIVAQLLFLEAEDPDKDIFLYINSPGGSITSGMAIYDTMQYIKPDVSTICIGMAASMGAFLLAAGAKGKRFALPNSEIMIHQPLGGFQGQATDIGIHADRILKIKQNLNSILSEKTGQPLEVIQRDTERDNFMDANQAKDYGLIDEVMVKKK.

Ser-98 (nucleophile) is an active-site residue. The active site involves His-123.

It belongs to the peptidase S14 family. Fourteen ClpP subunits assemble into 2 heptameric rings which stack back to back to give a disk-like structure with a central cavity, resembling the structure of eukaryotic proteasomes.

It is found in the cytoplasm. It carries out the reaction Hydrolysis of proteins to small peptides in the presence of ATP and magnesium. alpha-casein is the usual test substrate. In the absence of ATP, only oligopeptides shorter than five residues are hydrolyzed (such as succinyl-Leu-Tyr-|-NHMec, and Leu-Tyr-Leu-|-Tyr-Trp, in which cleavage of the -Tyr-|-Leu- and -Tyr-|-Trp bonds also occurs).. Its function is as follows. Cleaves peptides in various proteins in a process that requires ATP hydrolysis. Has a chymotrypsin-like activity. Plays a major role in the degradation of misfolded proteins. In Clostridium tetani (strain Massachusetts / E88), this protein is ATP-dependent Clp protease proteolytic subunit.